The sequence spans 497 residues: Succinate-semialdehyde dehydrogenase [NADP(+)] (497 aa).

Glu264 acts as the Proton acceptor in catalysis. Cys298 acts as the Nucleophile in catalysis.

The protein belongs to the aldehyde dehydrogenase family. In terms of assembly, homotetramer.

Its subcellular location is the cytoplasm. It catalyses the reaction succinate semialdehyde + NAD(+) + H2O = succinate + NADH + 2 H(+). The catalysed reaction is succinate semialdehyde + NADP(+) + H2O = succinate + NADPH + 2 H(+). The protein operates within amino-acid degradation; 4-aminobutanoate degradation. With respect to regulation, inhibited by AMP, ADP anf ATP. Its function is as follows. Catalyzes the oxidation of succinate semialdehyde to succinate. Can utilize both NAD(+) or NADP(+) as a coenzyme, but has a 2.5-fold lower activity with NADP(+) than with NAD(+). Functions in a gamma-aminobutyrate (GABA) degradation pathway that allows growth utilizing GABA as a nitrogen source. Functions in the GABA shunt, which allows to bypass 2 reactions in the TCA cycle by removing alpha-ketoglutarate from the cycle and feeding succinate and NADH back into the cycle. The sequence is that of Succinate-semialdehyde dehydrogenase [NADP(+)] from Saccharomyces cerevisiae (strain ATCC 204508 / S288c) (Baker's yeast).